An 89-amino-acid chain; its full sequence is Large ribosomal subunit protein eL34 (89 aa).

Residues 1 to 22 (MPAPRYKSGSSKKVYRKAPGNS) are disordered.

It belongs to the eukaryotic ribosomal protein eL34 family.

This is Large ribosomal subunit protein eL34 from Methanococcus maripaludis (strain DSM 14266 / JCM 13030 / NBRC 101832 / S2 / LL).